The primary structure comprises 116 residues: Protein Wnt-5a (116 aa).

Ser-1 is lipidated: O-palmitoleoyl serine; by PORCN. Asn-69 and Asn-83 each carry an N-linked (GlcNAc...) asparagine glycan. Cysteines 82 and 97 form a disulfide.

Belongs to the Wnt family. Post-translationally, palmitoleoylation is required for efficient binding to frizzled receptors. Depalmitoleoylation leads to Wnt signaling pathway inhibition.

It is found in the secreted. The protein resides in the extracellular space. It localises to the extracellular matrix. Functionally, ligand for members of the frizzled family of seven transmembrane receptors. Can activate or inhibit canonical Wnt signaling, depending on receptor context. Required during embryogenesis for extension of the primary anterior-posterior axis. The protein is Protein Wnt-5a (WNT5A) of Anser caerulescens (Snow goose).